A 324-amino-acid chain; its full sequence is Biotin synthase (324 aa).

Residues 50–278 enclose the Radical SAM core domain; it reads HAGPAFTCAI…QADILVAGGR (229 aa). The [4Fe-4S] cluster site is built by Cys-67, Cys-71, and Cys-74. Residues Cys-143 and Cys-203 each coordinate [2Fe-2S] cluster.

This sequence belongs to the radical SAM superfamily. Biotin synthase family. In terms of assembly, homodimer. The cofactor is [4Fe-4S] cluster. [2Fe-2S] cluster is required as a cofactor.

The enzyme catalyses (4R,5S)-dethiobiotin + (sulfur carrier)-SH + 2 reduced [2Fe-2S]-[ferredoxin] + 2 S-adenosyl-L-methionine = (sulfur carrier)-H + biotin + 2 5'-deoxyadenosine + 2 L-methionine + 2 oxidized [2Fe-2S]-[ferredoxin]. Its pathway is cofactor biosynthesis; biotin biosynthesis; biotin from 7,8-diaminononanoate: step 2/2. Its function is as follows. Catalyzes the conversion of dethiobiotin (DTB) to biotin by the insertion of a sulfur atom into dethiobiotin via a radical-based mechanism. The protein is Biotin synthase of Oleidesulfovibrio alaskensis (strain ATCC BAA-1058 / DSM 17464 / G20) (Desulfovibrio alaskensis).